The sequence spans 66 residues: Large ribosomal subunit protein uL29 (66 aa).

This sequence belongs to the universal ribosomal protein uL29 family.

The chain is Large ribosomal subunit protein uL29 from Syntrophobacter fumaroxidans (strain DSM 10017 / MPOB).